Reading from the N-terminus, the 388-residue chain is Na(+)/H(+) antiporter NhaA (388 aa).

Over 1 to 11 (MKHLHRFFSSD) the chain is Cytoplasmic. A helical membrane pass occupies residues 12 to 31 (ASGGIILIIAAILAMIMANS). At 32–58 (GATSGWYHDFLETPVQLRVGSLEINKN) the chain is on the periplasmic side. Residues 59-80 (MLLWINDALMAVFFLLVGLEVK) form a helical membrane-spanning segment. Residues 81 to 96 (RELMQGSLASLRQAAF) lie on the Cytoplasmic side of the membrane. A helical membrane pass occupies residues 97-116 (PVIAAIGGMIVPALLYLAFN). The Periplasmic portion of the chain corresponds to 117-122 (YADPIT). A helical transmembrane segment spans residues 123 to 130 (REGWAIPA). Residues 131–154 (ATDIAFALGVLALLGSRVPLALKI) are Cytoplasmic-facing. Residues 155 to 176 (FLMALAIIDDLGAIIIIALFYT) form a helical membrane-spanning segment. At 177–180 (NDLS) the chain is on the periplasmic side. A helical membrane pass occupies residues 181 to 200 (MASLGVAAVAIAVLAVLNLC). The Cytoplasmic segment spans residues 201–204 (GVRR). Residues 205–222 (TGVYILVGVVLWTAVLKS) traverse the membrane as a helical segment. Gly-223 is a topological domain (periplasmic). The helical transmembrane segment at 224 to 236 (VHATLAGVIVGFF) threads the bilayer. Topologically, residues 237–253 (IPLKEKHGRSPAKRLEH) are cytoplasmic. The helical transmembrane segment at 254–272 (VLHPWVAYLILPLFAFANA) threads the bilayer. Residues 273-286 (GVSLQGVTLDGLTS) are Periplasmic-facing. Residues 287 to 310 (ILPLGIIAGLLIGKPLGISLFCWL) form a helical membrane-spanning segment. The Cytoplasmic segment spans residues 311–339 (ALRLKLAHLPEGTTYQQIMAVGILCGIGF). The helical transmembrane segment at 340 to 350 (TMSIFIASLAF) threads the bilayer. Residues 351-357 (GSVDPEL) are Periplasmic-facing. Residues 358–380 (INWAKLGILVGSISSAVIGYSWL) traverse the membrane as a helical segment. Residues 381–388 (RVRLRPSV) lie on the Cytoplasmic side of the membrane.

This sequence belongs to the NhaA Na(+)/H(+) (TC 2.A.33) antiporter family.

Its subcellular location is the cell inner membrane. The catalysed reaction is Na(+)(in) + 2 H(+)(out) = Na(+)(out) + 2 H(+)(in). Its function is as follows. Na(+)/H(+) antiporter that extrudes sodium in exchange for external protons. This chain is Na(+)/H(+) antiporter NhaA, found in Escherichia coli O9:H4 (strain HS).